Here is a 200-residue protein sequence, read N- to C-terminus: Recombination protein RecR (200 aa).

The C4-type zinc-finger motif lies at 59-74 (CDICGNVCESSPCPVC). The region spanning 82 to 177 (SVICVVEEPK…KVTRLASGLP (96 aa)) is the Toprim domain.

This sequence belongs to the RecR family.

Its function is as follows. May play a role in DNA repair. It seems to be involved in an RecBC-independent recombinational process of DNA repair. It may act with RecF and RecO. The chain is Recombination protein RecR from Bifidobacterium longum (strain DJO10A).